Consider the following 368-residue polypeptide: F-box/kelch-repeat protein At2g44700 (368 aa).

The interval 1–23 (MSSSNEPPRKTDQPSSSSASASA) is disordered. Residues 14–23 (PSSSSASASA) are compositionally biased toward low complexity. One can recognise an F-box domain in the interval 25–71 (PSLFLSLPLEIISMILARVPKRYYPILCSVSKNMRSLVRSPEIHKAR). A Kelch repeat occupies 177-221 (KVYVIGGYQDDEIAAESFDLNTQTWEAAPIPDEKESHRWICKANV).

This chain is F-box/kelch-repeat protein At2g44700, found in Arabidopsis thaliana (Mouse-ear cress).